Consider the following 451-residue polypeptide: Chromosomal replication initiator protein DnaA (451 aa).

The domain I, interacts with DnaA modulators stretch occupies residues 1 to 71 (MSEKEIWDKV…QAIIYDVIGY (71 aa)). The segment at 71–112 (YEVKPHFISEDELASYNNVNTQEVQEPQVQHSSIDDKTWGKE) is domain II. The domain III, AAA+ region stretch occupies residues 113-329 (QFNMHNTFDT…GALTRLLAYS (217 aa)). ATP contacts are provided by Gly157, Gly159, Lys160, and Thr161. Residues 330–451 (KLQGKPITTE…ENLEKEIRNQ (122 aa)) are domain IV, binds dsDNA.

It belongs to the DnaA family. In terms of assembly, oligomerizes as a right-handed, spiral filament on DNA at oriC.

The protein localises to the cytoplasm. Functionally, plays an essential role in the initiation and regulation of chromosomal replication. ATP-DnaA binds to the origin of replication (oriC) to initiate formation of the DNA replication initiation complex once per cell cycle. Binds the DnaA box (a 9 base pair repeat at the origin) and separates the double-stranded (ds)DNA. Forms a right-handed helical filament on oriC DNA; dsDNA binds to the exterior of the filament while single-stranded (ss)DNA is stabiized in the filament's interior. The ATP-DnaA-oriC complex binds and stabilizes one strand of the AT-rich DNA unwinding element (DUE), permitting loading of DNA polymerase. After initiation quickly degrades to an ADP-DnaA complex that is not apt for DNA replication. Binds acidic phospholipids. The protein is Chromosomal replication initiator protein DnaA of Staphylococcus epidermidis (strain ATCC 12228 / FDA PCI 1200).